The sequence spans 311 residues: Transcriptional regulatory protein MoaR1 (311 aa).

Residues 15–117 (LNATTAGAVQ…SEPPGYRLLI (103 aa)) constitute a DNA-binding region (ompR/PhoB-type).

The protein belongs to the AfsR/DnrI/RedD regulatory family.

Acts as a positive transcriptional regulator of the molybdopterin biosynthesis moa1 locus, promoting the expression of the moaA1B1C1D1 genes. Binds directly to the moaA1 promoter. The polypeptide is Transcriptional regulatory protein MoaR1 (moaR1) (Mycobacterium tuberculosis (strain ATCC 25618 / H37Rv)).